The primary structure comprises 171 residues: uncharacterized protein (171 aa).

The signal sequence occupies residues 1–20; the sequence is MRRVLFSCFCGLLWSSSGWA. A disulfide bond links C40 and C80.

The protein belongs to the fimbrial protein family.

The protein resides in the fimbrium. Part of the sfmACDHF fimbrial operon. Could contribute to adhesion to various surfaces in specific environmental niches. Increases adhesion to eukaryotic T24 bladder epithelial cells in the absence of fim genes. This is an uncharacterized protein from Escherichia coli (strain K12).